Reading from the N-terminus, the 352-residue chain is MDSLNEVCYEQIKGTFYKGLFGDFPLIVDKKTGCFNATKLCVLGGKRFVDWNKTLRSKKLIQYYETRCDIKTESLLYEIKGDNNDEITKQITGTYLPKEFILDIASWISVEFYDKCNNIIINYFVNEYKTMDKKTLQSKINEVEEKMQKLLNEKEEELQEKNDKIDELILFSKRMEEDRKKDREMMIKQEKMLRELGIHLEDVSSQNNELIEKVDEQVEQNAVLNFKIDNIQNKLEIAVEDRAPQPKQNLKRERFILLKRNDDYYPYYTIRAQDINARSALKRQKNLYNEVSVLLDLTCHPNSKTLYVRVKDELKQKGVVFNLCKVSISNSKINEEELIKAMETINDEKRDV.

The region spanning 15–123 is the KilA-N domain; that stretch reads TFYKGLFGDF…DKCNNIIINY (109 aa). A coiled-coil region spans residues 129-236; the sequence is KTMDKKTLQS…KIDNIQNKLE (108 aa).

The protein belongs to the IIV-6 006L/238R/313L/468L family.

In Acheta domesticus (House cricket), this protein is Putative KilA-N domain-containing protein 006L.